Consider the following 108-residue polypeptide: Movement protein TGB2 (108 aa).

At 1 to 14 the chain is on the cytoplasmic side; sequence MPLTPPPDHSITYR. The chain crosses the membrane as a helical span at residues 15–31; sequence ILAVGLCSCCAIYAATR. The Lumenal segment spans residues 32 to 67; the sequence is STLPHTGDNLHSLPYGGKYSDGTKSICYSGPGPTPD. The chain crosses the membrane as a helical span at residues 68-85; it reads IPTHLPALLVLVLVVAIY. Residues 86-108 lie on the Cytoplasmic side of the membrane; that stretch reads ASSRLDFSVNYRCSCRVHNRSGQ.

This sequence belongs to the Tymovirales TGBp2 protein family.

The protein localises to the host endoplasmic reticulum membrane. Its function is as follows. Plays a role in viral cell-to-cell propagation, by facilitating genome transport to neighboring plant cells through plasmosdesmata,. The chain is Movement protein TGB2 from Strawberry mild yellow edge-associated virus (SMYEaV).